The chain runs to 115 residues: MREMAEDIEEIRRRKLMELQRKYLEQQKAQEEAERQQALIEAQIQAILRKILTPEARERLARVKLVRPELARQVELILVQLYQAGQITERIDDAKLKRILAQIEAKTRREFRIKW.

Belongs to the PDCD5 family.

The chain is DNA-binding protein PH1060 from Pyrococcus horikoshii (strain ATCC 700860 / DSM 12428 / JCM 9974 / NBRC 100139 / OT-3).